Consider the following 240-residue polypeptide: MSWQRPDGRQPNQLRPVNFELNFTRFSAGSVLAQCGETKVLCTASIEEYVPRFLLGSGQGWLTAEYRMLPSATQERQRRELLKLSGRTQEIQRLIGRSLRSCIDLQQLGERSITIDCDVLQADAGTRTTSITGGYVALALALNKLIKKGELIQSPLRFPVAAISVGLIEGEAFLDLNYPEDSKADIDFNVVMTGNLDLIEVQGTAEENSFTRSQLNDILDLAELGIKELVSLQNQALSQA.

Phosphate is bound by residues arginine 87 and glycine 125 to arginine 127.

This sequence belongs to the RNase PH family. As to quaternary structure, homohexameric ring arranged as a trimer of dimers.

The catalysed reaction is tRNA(n+1) + phosphate = tRNA(n) + a ribonucleoside 5'-diphosphate. Its function is as follows. Phosphorolytic 3'-5' exoribonuclease that plays an important role in tRNA 3'-end maturation. Removes nucleotide residues following the 3'-CCA terminus of tRNAs; can also add nucleotides to the ends of RNA molecules by using nucleoside diphosphates as substrates, but this may not be physiologically important. Probably plays a role in initiation of 16S rRNA degradation (leading to ribosome degradation) during starvation. This Crocosphaera subtropica (strain ATCC 51142 / BH68) (Cyanothece sp. (strain ATCC 51142)) protein is Ribonuclease PH.